Consider the following 352-residue polypeptide: Gamma-aminobutyric acid-binding protein (352 aa).

The N-terminal stretch at 1-28 is a signal peptide; the sequence is MFKSLHQYAHVFSRLSLFGLAFAAAAQA.

Belongs to the bacterial solute-binding protein 1 family.

The protein localises to the periplasm. In terms of biological role, binds specifically gamma-aminobutyric acid (GABA) with nanomolar affinity. Does not bind structurally related compounds such as 4-aminovaleric acid, spermidine, histamine and butyric acid. The polypeptide is Gamma-aminobutyric acid-binding protein (Pseudomonas aeruginosa (strain ATCC 15692 / DSM 22644 / CIP 104116 / JCM 14847 / LMG 12228 / 1C / PRS 101 / PAO1)).